Here is a 366-residue protein sequence, read N- to C-terminus: GTP cyclohydrolase 1 type 2 homolog (366 aa).

Histidine 64, histidine 65, aspartate 102, histidine 326, and glutamate 329 together coordinate a divalent metal cation.

Belongs to the GTP cyclohydrolase I type 2/NIF3 family. As to quaternary structure, homohexamer.

This is GTP cyclohydrolase 1 type 2 homolog from Staphylococcus epidermidis (strain ATCC 12228 / FDA PCI 1200).